A 342-amino-acid chain; its full sequence is Ribosomal RNA small subunit methyltransferase H (342 aa).

S-adenosyl-L-methionine contacts are provided by residues 36 to 38 (GGH), Asp-56, Phe-82, Asp-100, and Gln-107. The tract at residues 311 to 342 (GESGMGKGNSAAASRFPTADSPFPASANGDAA) is disordered.

Belongs to the methyltransferase superfamily. RsmH family.

It is found in the cytoplasm. It carries out the reaction cytidine(1402) in 16S rRNA + S-adenosyl-L-methionine = N(4)-methylcytidine(1402) in 16S rRNA + S-adenosyl-L-homocysteine + H(+). Functionally, specifically methylates the N4 position of cytidine in position 1402 (C1402) of 16S rRNA. This is Ribosomal RNA small subunit methyltransferase H from Xanthomonas axonopodis pv. citri (strain 306).